A 166-amino-acid chain; its full sequence is UPF0336 protein ML1908 (166 aa).

This sequence belongs to the UPF0336 family.

The sequence is that of UPF0336 protein ML1908 from Mycobacterium leprae (strain TN).